A 64-amino-acid chain; its full sequence is Alpha-conotoxin SI (64 aa).

The signal sequence occupies residues 1–21 (MGMRMMFTVFLLVVLATTVVS). Residues 22–49 (FPSDRASDGRDDEAKDERSDMHESDRKE) constitute a propeptide that is removed on maturation. The disordered stretch occupies residues 23 to 47 (PSDRASDGRDDEAKDERSDMHESDR). Residues 26–47 (RASDGRDDEAKDERSDMHESDR) are compositionally biased toward basic and acidic residues. Disulfide bonds link C51-C56 and C52-C62. C62 is modified (cysteine amide).

Belongs to the conotoxin A superfamily. Expressed by the venom duct.

The protein resides in the secreted. Its function is as follows. Alpha-conotoxins act on postsynaptic membranes, they bind to the nicotinic acetylcholine receptors (nAChR) and thus inhibit them. Is active on muscle nAChR (IC(50)=113 nM on adult subtype (alpha-1-beta-1-gamma-delta/CHRNA1-CHRNB1-CHRNG-CHRND) and IC(50)=142 nM on fetal subtype (alpha-1-beta-1-delta-epsilon/CHRNA1-CHRNB1-CHRND-CHRNE)). On mice muscle receptors, its higher affinity site is the alpha/delta nAChR subunit interface. On Torpedo receptors, it does not distinguish between alpha/delta and alpha/gamma acetylcholine-binding sites. In vivo, causes paralysis followed by death when injected into goldfish. In contrast, has no effect on mice, when similar doses are intraperitoneally or intracerebrally injected. This is Alpha-conotoxin SI from Conus striatus (Striated cone).